Reading from the N-terminus, the 397-residue chain is MEVLYSLSKTLKDARDKIVEGTLYSNVSDLIQQFNQMIVTMNGNDFQTGGIGNLPIRNWTFDFGLLGTTLLNLDANYVENARTTIEYFIDFIDNVCMDEMAREAQRNGVAPQSEALGKLAGIKFKRINFDNSSEYIENWNLQNRRQRTGFVFHKPNIFPYSASFTLNRSQPMHDNLMGTMWLNAGSEIQVAGFDYSCAINAPANIQQFEHIVQLRRALTTATITLLPDAERFSFPRVINSADGATTWFFNPVILRPNNVEVEFLLNGQIINTYQARFGTIIARNFDTIRSLFQLMRPPNMTPAVNALFPQAQPFQHHATVGLTLRIESAVCESVLADANETLLANVTAVRQEYAIPVGPVFPPGMNWTELITNYSPSREDNLQRVFTVASIRSMLIK.

Residues 62-73 (DFGLLGTTLLNL) form an interaction with the inner capsid protein VP2 region. Position 153 (H153) interacts with Zn(2+). Residues N266 and D286 each contribute to the Ca(2+) site.

Belongs to the rotavirus VP6 family. In terms of assembly, homotrimer. Interacts with the inner capsid protein VP2. Interacts with the outer capsid glycoprotein VP7. Interacts with the outer capsid protein VP5*. In terms of processing, the N-terminus is blocked. Sumoylated with SUMO1 and SUMO2. Sumoylation of viral proteins seems to have a positive role on viral replication.

It localises to the virion. Functionally, intermediate capsid protein that self assembles to form an icosahedral capsid with a T=13 symmetry, which consists of 230 trimers of VP6, with channels at each of its five-fold vertices. This capsid constitutes the middle concentric layer of the viral mature particle. The innermost VP2 capsid and the intermediate VP6 capsid remain intact following cell entry to protect the dsRNA from degradation and to prevent unfavorable antiviral responses in the host cell during all the replication cycle of the virus. Nascent transcripts are transcribed within the structural confines of this double-layered particle (DLP) and are extruded through the channels at the five-fold axes. VP6 is required for the transcription activity of the DLP. The chain is Intermediate capsid protein VP6 from Rotavirus A (strain RVA/Human/Japan/KU/1995/G1P1A[8]) (RV-A).